A 484-amino-acid chain; its full sequence is Acetyl-coenzyme A carboxylase carboxyl transferase subunit beta, chloroplastic (484 aa).

The region spanning 223-484 is the CoA carboxyltransferase N-terminal domain; it reads LWIQCDNCYG…LHAFFPLNKN (262 aa). Cysteine 227, cysteine 230, cysteine 243, and cysteine 246 together coordinate Zn(2+). The C4-type zinc finger occupies 227–246; that stretch reads CDNCYGLMYKKVKMNVCEQC.

It belongs to the AccD/PCCB family. As to quaternary structure, acetyl-CoA carboxylase is a heterohexamer composed of biotin carboxyl carrier protein, biotin carboxylase and 2 subunits each of ACCase subunit alpha and ACCase plastid-coded subunit beta (accD). The cofactor is Zn(2+).

Its subcellular location is the plastid. The protein localises to the chloroplast stroma. It carries out the reaction N(6)-carboxybiotinyl-L-lysyl-[protein] + acetyl-CoA = N(6)-biotinyl-L-lysyl-[protein] + malonyl-CoA. Its pathway is lipid metabolism; malonyl-CoA biosynthesis; malonyl-CoA from acetyl-CoA: step 1/1. In terms of biological role, component of the acetyl coenzyme A carboxylase (ACC) complex. Biotin carboxylase (BC) catalyzes the carboxylation of biotin on its carrier protein (BCCP) and then the CO(2) group is transferred by the transcarboxylase to acetyl-CoA to form malonyl-CoA. The sequence is that of Acetyl-coenzyme A carboxylase carboxyl transferase subunit beta, chloroplastic from Crucihimalaya wallichii (Rock-cress).